Here is a 586-residue protein sequence, read N- to C-terminus: Aspartate--tRNA(Asp/Asn) ligase (586 aa).

Position 172 (E172) interacts with L-aspartate. The interval 196–199 (QLYK) is aspartate. L-aspartate is bound at residue R218. ATP contacts are provided by residues 218–220 (RDE) and Q227. An L-aspartate-binding site is contributed by H446. ATP is bound at residue E480. L-aspartate is bound at residue R487. Position 532 to 535 (532 to 535 (GIDR)) interacts with ATP.

This sequence belongs to the class-II aminoacyl-tRNA synthetase family. Type 1 subfamily. Homodimer.

The protein localises to the cytoplasm. The catalysed reaction is tRNA(Asx) + L-aspartate + ATP = L-aspartyl-tRNA(Asx) + AMP + diphosphate. Aspartyl-tRNA synthetase with relaxed tRNA specificity since it is able to aspartylate not only its cognate tRNA(Asp) but also tRNA(Asn). Reaction proceeds in two steps: L-aspartate is first activated by ATP to form Asp-AMP and then transferred to the acceptor end of tRNA(Asp/Asn). The protein is Aspartate--tRNA(Asp/Asn) ligase of Borreliella burgdorferi (strain ATCC 35210 / DSM 4680 / CIP 102532 / B31) (Borrelia burgdorferi).